Here is a 1040-residue protein sequence, read N- to C-terminus: Multidrug resistance protein MdtB (1040 aa).

12 helical membrane-spanning segments follow: residues 25–45 (LLMA…PVAA), 347–367 (LMLA…NIPA), 369–389 (IIPG…MVFL), 396–416 (LTLM…IVVI), 440–460 (IGFT…PLLF), 472–492 (FAVT…TLTP), 537–557 (WLTL…WIVI), 863–883 (LGST…VLGV), 888–908 (FIHP…ALLA), 910–930 (IIAG…LIGI), 968–988 (ILMT…STGV), and 998–1018 (IAMV…TPVI).

Belongs to the resistance-nodulation-cell division (RND) (TC 2.A.6) family. MdtB subfamily. As to quaternary structure, part of a tripartite efflux system composed of MdtA, MdtB and MdtC. MdtB forms a heteromultimer with MdtC.

The protein localises to the cell inner membrane. This Salmonella gallinarum (strain 287/91 / NCTC 13346) protein is Multidrug resistance protein MdtB.